Consider the following 78-residue polypeptide: MAGQRRGGRRRRKVDFIAANHIEYIDYKDTDLLRRFISERGKILPRRVTGTSAKNQRKLTIAIKRSRIMGLMPFVSEE.

This sequence belongs to the bacterial ribosomal protein bS18 family. Part of the 30S ribosomal subunit. Forms a tight heterodimer with protein bS6.

Its function is as follows. Binds as a heterodimer with protein bS6 to the central domain of the 16S rRNA, where it helps stabilize the platform of the 30S subunit. This Levilactobacillus brevis (strain ATCC 367 / BCRC 12310 / CIP 105137 / JCM 1170 / LMG 11437 / NCIMB 947 / NCTC 947) (Lactobacillus brevis) protein is Small ribosomal subunit protein bS18.